Reading from the N-terminus, the 333-residue chain is Glycerol-3-phosphate dehydrogenase [NAD(P)+] (333 aa).

Residues serine 10, tryptophan 11, and lysine 105 each coordinate NADPH. Sn-glycerol 3-phosphate is bound by residues lysine 105, glycine 136, and threonine 138. An NADPH-binding site is contributed by alanine 140. The sn-glycerol 3-phosphate site is built by lysine 191, aspartate 244, serine 254, arginine 255, and asparagine 256. Lysine 191 (proton acceptor) is an active-site residue. Residue arginine 255 participates in NADPH binding. 2 residues coordinate NADPH: valine 279 and glutamate 281.

Belongs to the NAD-dependent glycerol-3-phosphate dehydrogenase family.

It is found in the cytoplasm. It carries out the reaction sn-glycerol 3-phosphate + NAD(+) = dihydroxyacetone phosphate + NADH + H(+). The enzyme catalyses sn-glycerol 3-phosphate + NADP(+) = dihydroxyacetone phosphate + NADPH + H(+). It participates in membrane lipid metabolism; glycerophospholipid metabolism. Its function is as follows. Catalyzes the reduction of the glycolytic intermediate dihydroxyacetone phosphate (DHAP) to sn-glycerol 3-phosphate (G3P), the key precursor for phospholipid synthesis. The protein is Glycerol-3-phosphate dehydrogenase [NAD(P)+] of Syntrophotalea carbinolica (strain DSM 2380 / NBRC 103641 / GraBd1) (Pelobacter carbinolicus).